Consider the following 105-residue polypeptide: Pyrimidine/purine nucleoside phosphorylase (105 aa).

It belongs to the nucleoside phosphorylase PpnP family.

It carries out the reaction a purine D-ribonucleoside + phosphate = a purine nucleobase + alpha-D-ribose 1-phosphate. The enzyme catalyses adenosine + phosphate = alpha-D-ribose 1-phosphate + adenine. The catalysed reaction is cytidine + phosphate = cytosine + alpha-D-ribose 1-phosphate. It catalyses the reaction guanosine + phosphate = alpha-D-ribose 1-phosphate + guanine. It carries out the reaction inosine + phosphate = alpha-D-ribose 1-phosphate + hypoxanthine. The enzyme catalyses thymidine + phosphate = 2-deoxy-alpha-D-ribose 1-phosphate + thymine. The catalysed reaction is uridine + phosphate = alpha-D-ribose 1-phosphate + uracil. It catalyses the reaction xanthosine + phosphate = alpha-D-ribose 1-phosphate + xanthine. Catalyzes the phosphorolysis of diverse nucleosides, yielding D-ribose 1-phosphate and the respective free bases. Can use uridine, adenosine, guanosine, cytidine, thymidine, inosine and xanthosine as substrates. Also catalyzes the reverse reactions. In Anaeromyxobacter sp. (strain Fw109-5), this protein is Pyrimidine/purine nucleoside phosphorylase.